The chain runs to 156 residues: MKIIEGNLALKGNEKIAIINARFNHIITDRLVEGAKDAFLRHGGDEKNLTLVLVPGAFEIPMALEKVLASGKFDAVCCVGAVIRGATPHFDYVSAETTKGIANVTLKYAKPVTFGVLTVDSIEQAIERAGSKAGNKGFEAMTGVIEMLNLYKKLGE.

5-amino-6-(D-ribitylamino)uracil-binding positions include Phe23, 57–59, and 81–83; these read AFE and AVI. (2S)-2-hydroxy-3-oxobutyl phosphate is bound at residue 86–87; it reads AT. The Proton donor role is filled by His89. Position 114 (Phe114) interacts with 5-amino-6-(D-ribitylamino)uracil. Arg128 is a binding site for (2S)-2-hydroxy-3-oxobutyl phosphate.

The protein belongs to the DMRL synthase family.

It carries out the reaction (2S)-2-hydroxy-3-oxobutyl phosphate + 5-amino-6-(D-ribitylamino)uracil = 6,7-dimethyl-8-(1-D-ribityl)lumazine + phosphate + 2 H2O + H(+). It participates in cofactor biosynthesis; riboflavin biosynthesis; riboflavin from 2-hydroxy-3-oxobutyl phosphate and 5-amino-6-(D-ribitylamino)uracil: step 1/2. In terms of biological role, catalyzes the formation of 6,7-dimethyl-8-ribityllumazine by condensation of 5-amino-6-(D-ribitylamino)uracil with 3,4-dihydroxy-2-butanone 4-phosphate. This is the penultimate step in the biosynthesis of riboflavin. This is 6,7-dimethyl-8-ribityllumazine synthase from Campylobacter concisus (strain 13826).